The chain runs to 223 residues: Chorismate dehydratase (223 aa).

The protein belongs to the MqnA/MqnD family. MqnA subfamily.

It carries out the reaction chorismate = 3-[(1-carboxyvinyl)-oxy]benzoate + H2O. The protein operates within quinol/quinone metabolism; menaquinone biosynthesis. Functionally, catalyzes the dehydration of chorismate into 3-[(1-carboxyvinyl)oxy]benzoate, a step in the biosynthesis of menaquinone (MK, vitamin K2). The protein is Chorismate dehydratase of Campylobacter jejuni subsp. jejuni serotype O:23/36 (strain 81-176).